A 210-amino-acid polypeptide reads, in one-letter code: ATP-dependent Clp protease proteolytic subunit (210 aa).

Residue Ser-111 is the Nucleophile of the active site. His-136 is an active-site residue.

It belongs to the peptidase S14 family. In terms of assembly, fourteen ClpP subunits assemble into 2 heptameric rings which stack back to back to give a disk-like structure with a central cavity, resembling the structure of eukaryotic proteasomes.

Its subcellular location is the cytoplasm. It carries out the reaction Hydrolysis of proteins to small peptides in the presence of ATP and magnesium. alpha-casein is the usual test substrate. In the absence of ATP, only oligopeptides shorter than five residues are hydrolyzed (such as succinyl-Leu-Tyr-|-NHMec, and Leu-Tyr-Leu-|-Tyr-Trp, in which cleavage of the -Tyr-|-Leu- and -Tyr-|-Trp bonds also occurs).. Functionally, cleaves peptides in various proteins in a process that requires ATP hydrolysis. Has a chymotrypsin-like activity. Plays a major role in the degradation of misfolded proteins. The sequence is that of ATP-dependent Clp protease proteolytic subunit from Halorhodospira halophila (strain DSM 244 / SL1) (Ectothiorhodospira halophila (strain DSM 244 / SL1)).